Consider the following 459-residue polypeptide: Glutamyl-tRNA reductase (459 aa).

Residues 49-52, Ser109, 114-116, and Gln120 contribute to the substrate site; these read TCNR and ETQ. Residue Cys50 is the Nucleophile of the active site. 189 to 194 is a binding site for NADP(+); the sequence is GAGKMG.

It belongs to the glutamyl-tRNA reductase family. In terms of assembly, homodimer.

It catalyses the reaction (S)-4-amino-5-oxopentanoate + tRNA(Glu) + NADP(+) = L-glutamyl-tRNA(Glu) + NADPH + H(+). Its pathway is porphyrin-containing compound metabolism; protoporphyrin-IX biosynthesis; 5-aminolevulinate from L-glutamyl-tRNA(Glu): step 1/2. Its function is as follows. Catalyzes the NADPH-dependent reduction of glutamyl-tRNA(Glu) to glutamate 1-semialdehyde (GSA). In Halalkalibacterium halodurans (strain ATCC BAA-125 / DSM 18197 / FERM 7344 / JCM 9153 / C-125) (Bacillus halodurans), this protein is Glutamyl-tRNA reductase.